A 312-amino-acid chain; its full sequence is DNA-directed RNA polymerase subunit alpha (312 aa).

Residues 1-227 form an alpha N-terminal domain (alpha-NTD) region; sequence MNNFYIKCLK…SFFSSLLENK (227 aa). Residues 243–312 are alpha C-terminal domain (alpha-CTD); the sequence is PKNPHTNIAI…KNKLGIVLSN (70 aa).

The protein belongs to the RNA polymerase alpha chain family. In plastids the minimal PEP RNA polymerase catalytic core is composed of four subunits: alpha, beta, beta', and beta''. When a (nuclear-encoded) sigma factor is associated with the core the holoenzyme is formed, which can initiate transcription.

Its subcellular location is the plastid. It localises to the chloroplast. It carries out the reaction RNA(n) + a ribonucleoside 5'-triphosphate = RNA(n+1) + diphosphate. DNA-dependent RNA polymerase catalyzes the transcription of DNA into RNA using the four ribonucleoside triphosphates as substrates. The chain is DNA-directed RNA polymerase subunit alpha from Trieres chinensis (Marine centric diatom).